A 335-amino-acid polypeptide reads, in one-letter code: Acetyl-coenzyme A carboxylase carboxyl transferase subunit alpha (335 aa).

Residues 40 to 294 form the CoA carboxyltransferase C-terminal domain; it reads QLETLATRRR…KGAIEKHLNE (255 aa).

This sequence belongs to the AccA family. In terms of assembly, acetyl-CoA carboxylase is a heterohexamer composed of biotin carboxyl carrier protein (AccB), biotin carboxylase (AccC) and two subunits each of ACCase subunit alpha (AccA) and ACCase subunit beta (AccD).

It localises to the cytoplasm. It catalyses the reaction N(6)-carboxybiotinyl-L-lysyl-[protein] + acetyl-CoA = N(6)-biotinyl-L-lysyl-[protein] + malonyl-CoA. It participates in lipid metabolism; malonyl-CoA biosynthesis; malonyl-CoA from acetyl-CoA: step 1/1. Component of the acetyl coenzyme A carboxylase (ACC) complex. First, biotin carboxylase catalyzes the carboxylation of biotin on its carrier protein (BCCP) and then the CO(2) group is transferred by the carboxyltransferase to acetyl-CoA to form malonyl-CoA. The protein is Acetyl-coenzyme A carboxylase carboxyl transferase subunit alpha of Prochlorococcus marinus subsp. pastoris (strain CCMP1986 / NIES-2087 / MED4).